Here is a 734-residue protein sequence, read N- to C-terminus: Photosystem I P700 chlorophyll a apoprotein A2 (734 aa).

Helical transmembrane passes span 46–69 (IFAS…FHVA), 135–158 (LYTG…LHLQ), 175–199 (LNHH…HVAI), 273–291 (MAHH…GHMY), 330–353 (IHFQ…QHMY), 369–395 (AALY…IFFI), 417–439 (AIIS…LYVH), and 517–535 (FLVH…LILV). Residues C559 and C568 each coordinate [4Fe-4S] cluster. 2 consecutive transmembrane segments (helical) span residues 575–596 (AFYL…YWHW) and 643–665 (LSVW…MFLI). The chlorophyll a site is built by H654, M662, and Y670. W671 contributes to the phylloquinone binding site. A helical transmembrane segment spans residues 707–727 (LVGLAHFSVGYIFTYAAFLIA).

Belongs to the PsaA/PsaB family. In terms of assembly, the PsaA/B heterodimer binds the P700 chlorophyll special pair and subsequent electron acceptors. PSI consists of a core antenna complex that captures photons, and an electron transfer chain that converts photonic excitation into a charge separation. The eukaryotic PSI reaction center is composed of at least 11 subunits. Requires P700 is a chlorophyll a/chlorophyll a' dimer, A0 is one or more chlorophyll a, A1 is one or both phylloquinones and FX is a shared 4Fe-4S iron-sulfur center. as cofactor.

Its subcellular location is the plastid. The protein localises to the chloroplast thylakoid membrane. The enzyme catalyses reduced [plastocyanin] + hnu + oxidized [2Fe-2S]-[ferredoxin] = oxidized [plastocyanin] + reduced [2Fe-2S]-[ferredoxin]. Its function is as follows. PsaA and PsaB bind P700, the primary electron donor of photosystem I (PSI), as well as the electron acceptors A0, A1 and FX. PSI is a plastocyanin-ferredoxin oxidoreductase, converting photonic excitation into a charge separation, which transfers an electron from the donor P700 chlorophyll pair to the spectroscopically characterized acceptors A0, A1, FX, FA and FB in turn. Oxidized P700 is reduced on the lumenal side of the thylakoid membrane by plastocyanin. The chain is Photosystem I P700 chlorophyll a apoprotein A2 from Arabidopsis thaliana (Mouse-ear cress).